A 459-amino-acid polypeptide reads, in one-letter code: Vacuolar amino acid transporter 5 (459 aa).

Helical transmembrane passes span glycine 8–phenylalanine 28, leucine 33–leucine 53, valine 82–isoleucine 102, phenylalanine 131–phenylalanine 151, alanine 161–valine 181, leucine 206–isoleucine 226, isoleucine 240–tyrosine 260, and serine 278–leucine 298. Over residues phenylalanine 335–glutamate 351 the composition is skewed to polar residues. The tract at residues phenylalanine 335–leucine 354 is disordered. The next 3 membrane-spanning stretches (helical) occupy residues isoleucine 364 to alanine 384, valine 386 to phenylalanine 406, and leucine 434 to leucine 454.

It belongs to the amino acid/polyamine transporter 2 family.

Its subcellular location is the vacuole membrane. Functionally, probable amino acid transporter of unknown specificity. This is Vacuolar amino acid transporter 5 (AVT5) from Saccharomyces cerevisiae (strain ATCC 204508 / S288c) (Baker's yeast).